The following is a 62-amino-acid chain: Potassium channel toxin alpha-KTx Tx790 (62 aa).

The N-terminal stretch at 1–18 is a signal peptide; the sequence is MQKLFIVLVLFCILRLDA. 3 cysteine pairs are disulfide-bonded: cysteine 28-cysteine 46, cysteine 33-cysteine 59, and cysteine 37-cysteine 61.

This sequence belongs to the short scorpion toxin superfamily. Potassium channel inhibitor family. Alpha-KTx 23 subfamily. As to expression, expressed by the venom gland.

It is found in the secreted. Its function is as follows. May block potassium channels. The sequence is that of Potassium channel toxin alpha-KTx Tx790 from Buthus israelis (Israeli scorpion).